Consider the following 184-residue polypeptide: C-phycoerythrin beta chain (184 aa).

Cys-48 and Cys-59 together coordinate (2R,3E)-phycoerythrobilin. Residue Asn-70 is modified to N4-methylasparagine. Cys-80 and Cys-165 together coordinate (2R,3E)-phycoerythrobilin.

It belongs to the phycobiliprotein family. As to quaternary structure, heterodimer of an alpha and a beta chain. Contains three covalently linked bilin chromophores.

It localises to the cellular thylakoid membrane. Functionally, light-harvesting photosynthetic bile pigment-protein from the phycobiliprotein complex. The polypeptide is C-phycoerythrin beta chain (cpeB) (Microchaete diplosiphon (Fremyella diplosiphon)).